Consider the following 177-residue polypeptide: uncharacterized protein (177 aa).

This sequence to Synechocystis PCC 6803 slr1290 and sll0925.

This is an uncharacterized protein from Synechocystis sp. (strain ATCC 27184 / PCC 6803 / Kazusa).